We begin with the raw amino-acid sequence, 902 residues long: Phosphoenolpyruvate carboxylase (902 aa).

His-132 is a catalytic residue. The segment at 327–346 is disordered; the sequence is DALERPEKTAGKKSSKRTPY. Residue Lys-561 is part of the active site.

The protein belongs to the PEPCase type 1 family. Mg(2+) is required as a cofactor.

The catalysed reaction is oxaloacetate + phosphate = phosphoenolpyruvate + hydrogencarbonate. Functionally, forms oxaloacetate, a four-carbon dicarboxylic acid source for the tricarboxylic acid cycle. The protein is Phosphoenolpyruvate carboxylase of Corynebacterium diphtheriae (strain ATCC 700971 / NCTC 13129 / Biotype gravis).